Consider the following 142-residue polypeptide: MYYVALDVGSRTLGIATGDGEFKIASPYCVISFNQYDFRQCLAELKEKTASFFYDFKFVIGMPKNIDQTKSSTTEMVENFIELLKANYKNEVIIYDESYTSIIADQLLIDNQIKAKKRKEKIDKLAAFVILQSFFDDDRYPK.

Belongs to the YqgF nuclease family.

It is found in the cytoplasm. In terms of biological role, could be a nuclease involved in processing of the 5'-end of pre-16S rRNA. The protein is Putative pre-16S rRNA nuclease of Mycoplasmoides gallisepticum (strain R(low / passage 15 / clone 2)) (Mycoplasma gallisepticum).